The chain runs to 378 residues: Alkanesulfonate monooxygenase (378 aa).

This sequence belongs to the SsuD family.

It catalyses the reaction an alkanesulfonate + FMNH2 + O2 = an aldehyde + FMN + sulfite + H2O + 2 H(+). Its function is as follows. Catalyzes the desulfonation of aliphatic sulfonates. In Bacillus velezensis (strain DSM 23117 / BGSC 10A6 / LMG 26770 / FZB42) (Bacillus amyloliquefaciens subsp. plantarum), this protein is Alkanesulfonate monooxygenase.